The sequence spans 372 residues: tRNA-specific 2-thiouridylase MnmA (372 aa).

Residues 16-23 (GMSGGVDS) and Met-42 each bind ATP. An interaction with target base in tRNA region spans residues 102 to 104 (NPD). Cys-107 (nucleophile) is an active-site residue. Cys-107 and Cys-205 are disulfide-bonded. Position 132 (Gly-132) interacts with ATP. Residues 155 to 157 (KDQ) form an interaction with tRNA region. Cys-205 acts as the Cysteine persulfide intermediate in catalysis. Residues 317–318 (RY) are interaction with tRNA.

It belongs to the MnmA/TRMU family.

The protein localises to the cytoplasm. It carries out the reaction S-sulfanyl-L-cysteinyl-[protein] + uridine(34) in tRNA + AH2 + ATP = 2-thiouridine(34) in tRNA + L-cysteinyl-[protein] + A + AMP + diphosphate + H(+). Functionally, catalyzes the 2-thiolation of uridine at the wobble position (U34) of tRNA, leading to the formation of s(2)U34. The sequence is that of tRNA-specific 2-thiouridylase MnmA from Shewanella sp. (strain W3-18-1).